The chain runs to 211 residues: Uracil phosphoribosyltransferase (211 aa).

A GTP-binding site is contributed by 30–34 (KGLVR). 5-phospho-alpha-D-ribose 1-diphosphate-binding positions include arginine 79, arginine 104, and 133 to 141 (DPMLATGTT). Uracil contacts are provided by residues isoleucine 197 and 202-204 (GDA). Residue aspartate 203 coordinates 5-phospho-alpha-D-ribose 1-diphosphate.

This sequence belongs to the UPRTase family. Requires Mg(2+) as cofactor.

The enzyme catalyses UMP + diphosphate = 5-phospho-alpha-D-ribose 1-diphosphate + uracil. It functions in the pathway pyrimidine metabolism; UMP biosynthesis via salvage pathway; UMP from uracil: step 1/1. Allosterically activated by GTP. Its function is as follows. Catalyzes the conversion of uracil and 5-phospho-alpha-D-ribose 1-diphosphate (PRPP) to UMP and diphosphate. This is Uracil phosphoribosyltransferase from Pyrobaculum arsenaticum (strain DSM 13514 / JCM 11321 / PZ6).